Consider the following 203-residue polypeptide: Cytochrome c oxidase assembly protein CtaG (203 aa).

Residues 1–19 (MDAGKAERRAGNGRRTDGR) lie on the Cytoplasmic side of the membrane. The helical; Signal-anchor for type II membrane protein transmembrane segment at 20 to 42 (RHLVVAAACAAFIAAMVGVTYAS) threads the bilayer. Topologically, residues 43–203 (VPLYAMFCAL…AAARASGTGG (161 aa)) are periplasmic.

This sequence belongs to the COX11/CtaG family.

It is found in the cell inner membrane. Functionally, exerts its effect at some terminal stage of cytochrome c oxidase synthesis, probably by being involved in the insertion of the copper B into subunit I. The sequence is that of Cytochrome c oxidase assembly protein CtaG from Xanthobacter autotrophicus (strain ATCC BAA-1158 / Py2).